The chain runs to 256 residues: Tryptophan synthase alpha chain (256 aa).

Catalysis depends on proton acceptor residues Glu-51 and Asp-62.

The protein belongs to the TrpA family. As to quaternary structure, tetramer of two alpha and two beta chains.

It carries out the reaction (1S,2R)-1-C-(indol-3-yl)glycerol 3-phosphate + L-serine = D-glyceraldehyde 3-phosphate + L-tryptophan + H2O. It participates in amino-acid biosynthesis; L-tryptophan biosynthesis; L-tryptophan from chorismate: step 5/5. Its function is as follows. The alpha subunit is responsible for the aldol cleavage of indoleglycerol phosphate to indole and glyceraldehyde 3-phosphate. The protein is Tryptophan synthase alpha chain of Solidesulfovibrio magneticus (strain ATCC 700980 / DSM 13731 / RS-1) (Desulfovibrio magneticus).